The following is a 397-amino-acid chain: Probable sugar efflux transporter (397 aa).

The next 12 helical transmembrane spans lie at V15–L35, G51–L71, L81–F101, V103–A123, A136–V156, F170–L190, P209–Y229, F246–G266, A273–P293, L301–V321, V333–G353, and D364–F384.

It belongs to the major facilitator superfamily. SotB (TC 2.A.1.2) family.

The protein localises to the cell inner membrane. Involved in the efflux of sugars. The physiological role may be the reduction of the intracellular concentration of toxic sugars or sugar metabolites. The chain is Probable sugar efflux transporter from Escherichia fergusonii (strain ATCC 35469 / DSM 13698 / CCUG 18766 / IAM 14443 / JCM 21226 / LMG 7866 / NBRC 102419 / NCTC 12128 / CDC 0568-73).